The following is a 242-amino-acid chain: Small ribosomal subunit protein uS2 (242 aa).

This sequence belongs to the universal ribosomal protein uS2 family.

The protein is Small ribosomal subunit protein uS2 of Aeromonas hydrophila subsp. hydrophila (strain ATCC 7966 / DSM 30187 / BCRC 13018 / CCUG 14551 / JCM 1027 / KCTC 2358 / NCIMB 9240 / NCTC 8049).